We begin with the raw amino-acid sequence, 84 residues long: Small ribosomal subunit protein bS16 (84 aa).

Belongs to the bacterial ribosomal protein bS16 family.

The polypeptide is Small ribosomal subunit protein bS16 (Burkholderia mallei (strain NCTC 10247)).